Reading from the N-terminus, the 413-residue chain is Divalent metal cation transporter MntH (413 aa).

A run of 11 helical transmembrane segments spans residues 19 to 39, 46 to 66, 94 to 114, 122 to 142, 156 to 176, 196 to 216, 241 to 261, 290 to 310, 329 to 349, 350 to 370, and 389 to 409; these read LALM…GNFA, ASFG…AMLI, VWFY…AEFI, LVLG…TFLI, VIGG…IFSQ, AVFL…IYLH, IAMT…AAAF, IFGL…TLAG, AITM…TRIL, VMSQ…LLIF, and IGWA…VGSL.

Belongs to the NRAMP family.

The protein localises to the cell inner membrane. Functionally, h(+)-stimulated, divalent metal cation uptake system. This Klebsiella pneumoniae subsp. pneumoniae (strain ATCC 700721 / MGH 78578) protein is Divalent metal cation transporter MntH.